The chain runs to 459 residues: Interleukin-7 receptor subunit alpha (459 aa).

An N-terminal signal peptide occupies residues 1 to 20 (MMALGRAFAIVFCLIQAVSG). Over 21–239 (ESGNAQDGDL…PEPKNQGGWD (219 aa)) the chain is Extracellular. The cysteines at positions 42 and 57 are disulfide-linked. The N-linked (GlcNAc...) asparagine glycan is linked to Asn-60. Intrachain disulfides connect Cys-74–Cys-82 and Cys-108–Cys-118. Residues Asn-115 and Asn-177 are each glycosylated (N-linked (GlcNAc...) asparagine). Positions 131–232 (APSDLKVVYR…PSSTFETPEP (102 aa)) constitute a Fibronectin type-III domain. The short motif at 218 to 222 (WSEWS) is the WSXWS motif element. Residues 240–264 (PVLPSVTILSLFSVFLLVILAHVLW) form a helical membrane-spanning segment. The Cytoplasmic segment spans residues 265-459 (KKRIKPVVWP…VTMSSFYQNK (195 aa)). The short motif at 272 to 280 (VWPSLPDHK) is the Box 1 motif element. Thr-282 carries the phosphothreonine; by PKC modification. Disordered regions lie at residues 337-365 (TQGH…RRES) and 378-413 (NAPP…NTNV). Residues 347-357 (ANRSPETSVSP) show a composition bias toward polar residues. Over residues 388–397 (PDYRDGDRNR) the composition is skewed to basic and acidic residues.

Belongs to the type I cytokine receptor family. Type 4 subfamily. In terms of assembly, the IL7 receptor is a heterodimer of IL7R and IL2RG. The TSLP receptor is a heterodimer of CRLF2 and IL7R. Interacts with CD53. N-glycosylated IL-7Ralpha binds IL7 300-fold more tightly than the unglycosylated form. In terms of processing, ubiquitinated by MARCHF8; leading to lysosomal degradation. As to expression, spleen, thymus and fetal liver.

It is found in the membrane. Receptor for interleukin-7. Also acts as a receptor for thymic stromal lymphopoietin (TSLP). The sequence is that of Interleukin-7 receptor subunit alpha (Il7r) from Mus musculus (Mouse).